The primary structure comprises 599 residues: Putative sensor histidine kinase NtrY-like (599 aa).

4 consecutive transmembrane segments (helical) span residues 17–37 (VLIF…FYVI), 44–64 (FSTI…LGVV), 85–105 (IVIA…VFSV), and 285–305 (IMFI…GVIF). Residues 307–361 (AKIVKPIKKLVTATDNVKDGDLTVQVPENEVDKDEIGTLYVAFNRMIKQLSRQQR) enclose the HAMP domain. A Histidine kinase domain is found at 378–589 (KVAHEIKNPL…IIDIKFDLKE (212 aa)). A Phosphohistidine; by autocatalysis modification is found at H381.

The protein localises to the cell membrane. It catalyses the reaction ATP + protein L-histidine = ADP + protein N-phospho-L-histidine.. Functionally, member of the two-component regulatory system RC0948/RC0849. This chain is Putative sensor histidine kinase NtrY-like, found in Rickettsia conorii (strain ATCC VR-613 / Malish 7).